The chain runs to 346 residues: MTQQRPPLEIRLCGPRGFCAGVDRAIQIVVLALKKYGAPVYVRHEIVHNRYVVEGLQARGAIFVEELDEIPAAHRNQPVVFSAHGVPKSVPADAEAKNLFYLDATCPLVSKVHKQAMRHQRLGRHVILIGHSGHPEVIGTMGQLPDGAVTLIETVEDAHTCHFDDEDNLGFVTQTTLSVDDTAGIIKELQARFPNLAAPAAESICYATTNRQDAVRAAAPGCDLFLIVGAPNSSNSKRLVEVAEKAGARMSMLVQRAEDIEWEQIGDISVVGLSAGASAPEIIVDEIIDAFKAHFDVKIELAETTVETENFLVNREIRDVELTVKDMAFVNGEHRVVGISKLMQGK.

Cysteine 19 contributes to the [4Fe-4S] cluster binding site. (2E)-4-hydroxy-3-methylbut-2-enyl diphosphate-binding residues include histidine 48 and histidine 84. Dimethylallyl diphosphate is bound by residues histidine 48 and histidine 84. 2 residues coordinate isopentenyl diphosphate: histidine 48 and histidine 84. Residue cysteine 106 coordinates [4Fe-4S] cluster. Residue histidine 134 participates in (2E)-4-hydroxy-3-methylbut-2-enyl diphosphate binding. Histidine 134 lines the dimethylallyl diphosphate pocket. Isopentenyl diphosphate is bound at residue histidine 134. Catalysis depends on glutamate 136, which acts as the Proton donor. Threonine 175 serves as a coordination point for (2E)-4-hydroxy-3-methylbut-2-enyl diphosphate. Residue cysteine 205 coordinates [4Fe-4S] cluster. (2E)-4-hydroxy-3-methylbut-2-enyl diphosphate is bound by residues serine 233, serine 234, asparagine 235, and serine 278. Residues serine 233, serine 234, asparagine 235, and serine 278 each coordinate dimethylallyl diphosphate. Residues serine 233, serine 234, asparagine 235, and serine 278 each contribute to the isopentenyl diphosphate site.

It belongs to the IspH family. [4Fe-4S] cluster serves as cofactor.

It carries out the reaction isopentenyl diphosphate + 2 oxidized [2Fe-2S]-[ferredoxin] + H2O = (2E)-4-hydroxy-3-methylbut-2-enyl diphosphate + 2 reduced [2Fe-2S]-[ferredoxin] + 2 H(+). The enzyme catalyses dimethylallyl diphosphate + 2 oxidized [2Fe-2S]-[ferredoxin] + H2O = (2E)-4-hydroxy-3-methylbut-2-enyl diphosphate + 2 reduced [2Fe-2S]-[ferredoxin] + 2 H(+). It participates in isoprenoid biosynthesis; dimethylallyl diphosphate biosynthesis; dimethylallyl diphosphate from (2E)-4-hydroxy-3-methylbutenyl diphosphate: step 1/1. The protein operates within isoprenoid biosynthesis; isopentenyl diphosphate biosynthesis via DXP pathway; isopentenyl diphosphate from 1-deoxy-D-xylulose 5-phosphate: step 6/6. Functionally, catalyzes the conversion of 1-hydroxy-2-methyl-2-(E)-butenyl 4-diphosphate (HMBPP) into a mixture of isopentenyl diphosphate (IPP) and dimethylallyl diphosphate (DMAPP). Acts in the terminal step of the DOXP/MEP pathway for isoprenoid precursor biosynthesis. This chain is 4-hydroxy-3-methylbut-2-enyl diphosphate reductase, found in Brucella suis biovar 1 (strain 1330).